The primary structure comprises 301 residues: MSKFGAMVMGPAGAGKSTFCAALITHLNLNRRSAFYINLDPAAESFEHEPDLDIKELISLKDAMEEVGLGPNGGLIYCFEFLMENLDWLTDALEGLTEEYLIIIDMPGQIELYTHVPILPALVKFLSQPGSLDVRMAAVYLLEATFVVDRAKFFSGTLSAMSAMLMLEVPHINILSKMDLVKGQVKKKDLKRFLTPDVGLLDDDPVEHTRRIAEGQDAEDDESKAPDEKDQVMKGASFRRLNRAVAGLIESFSMINYHKLDVTNEDSVAAILSYIDDCIQFHEAQDPKEPHDDEETEEFEG.

Gly-13–Thr-18 provides a ligand contact to GTP. Positions Gly-70–Asn-72 match the Gly-Pro-Asn (GPN)-loop; involved in dimer interface motif. Residue Ser-176–Asp-179 participates in GTP binding. The disordered stretch occupies residues Ile-212 to Val-232. A compositionally biased stretch (basic and acidic residues) spans Ser-223–Val-232.

Belongs to the GPN-loop GTPase family. Heterodimers with GPN1 or GPN2. Binds to RNA polymerase II (RNAPII).

Its function is as follows. Small GTPase required for proper nuclear import of RNA polymerase II and III (RNAPII and RNAPIII). May act at an RNAP assembly step prior to nuclear import. The protein is GPN-loop GTPase 3 of Gibberella zeae (strain ATCC MYA-4620 / CBS 123657 / FGSC 9075 / NRRL 31084 / PH-1) (Wheat head blight fungus).